The following is a 455-amino-acid chain: Epoxide hydrolase 1 (455 aa).

A helical; Signal-anchor for type III membrane protein membrane pass occupies residues 1-21 (MWLEILLTSVLGFAIYWFISR). Residues 22–455 (DKEETLPLED…RKFLSVLERQ (434 aa)) are Cytoplasmic-facing. Asp-226 functions as the Nucleophile in the catalytic mechanism. Position 295 is a dimethylated arginine (Arg-295). Tyr-374 acts as the Proton donor in catalysis. The active-site Proton acceptor is His-431.

This sequence belongs to the peptidase S33 family. In terms of tissue distribution, found in liver.

It localises to the microsome membrane. The protein resides in the endoplasmic reticulum membrane. The catalysed reaction is cis-stilbene oxide + H2O = (1R,2R)-hydrobenzoin. It catalyses the reaction 1-(4-methoxyphenyl)-N-methyl-N-[(3-methyloxetan-3-yl)methyl]methanamine + H2O = 2-{[(4-methoxybenzyl)(methyl)amino]methyl}-2-methylpropane-1,3-diol. The enzyme catalyses 8,9-epoxy-(5Z,11Z,14Z)-eicosatrienoate + H2O = 8,9-dihydroxy-(5Z,11Z,14Z)-eicosatrienoate. It carries out the reaction 11,12-epoxy-(5Z,8Z,14Z)-eicosatrienoate + H2O = 11,12-dihydroxy-(5Z,8Z,14Z)-eicosatrienoate. The catalysed reaction is 2-(5Z,8Z,11Z,14Z-eicosatetraenoyl)-glycerol + H2O = glycerol + (5Z,8Z,11Z,14Z)-eicosatetraenoate + H(+). Inhibited by 10-hydroxystearamide and methoxy-arachidonyl fluorophosphate. Biotransformation enzyme that catalyzes the hydrolysis of arene and aliphatic epoxides to less reactive and more water soluble dihydrodiols by the trans addition of water. Plays a role in the metabolism of endogenous lipids such as epoxide-containing fatty acids. Metabolizes the abundant endocannabinoid 2-arachidonoylglycerol (2-AG) to free arachidonic acid (AA) and glycerol. Binds 20(S)-hydroxycholesterol (20(S)-OHC). In Homo sapiens (Human), this protein is Epoxide hydrolase 1.